Consider the following 166-residue polypeptide: Large ribosomal subunit protein uL10 (166 aa).

This sequence belongs to the universal ribosomal protein uL10 family. As to quaternary structure, part of the ribosomal stalk of the 50S ribosomal subunit. The N-terminus interacts with L11 and the large rRNA to form the base of the stalk. The C-terminus forms an elongated spine to which L12 dimers bind in a sequential fashion forming a multimeric L10(L12)X complex.

Forms part of the ribosomal stalk, playing a central role in the interaction of the ribosome with GTP-bound translation factors. The protein is Large ribosomal subunit protein uL10 of Streptococcus agalactiae serotype III (strain NEM316).